Reading from the N-terminus, the 502-residue chain is Xylulose kinase (502 aa).

82–83 serves as a coordination point for substrate; it reads MH. Asp240 (proton acceptor) is an active-site residue.

Belongs to the FGGY kinase family.

The catalysed reaction is D-xylulose + ATP = D-xylulose 5-phosphate + ADP + H(+). Functionally, catalyzes the phosphorylation of D-xylulose to D-xylulose 5-phosphate. In Levilactobacillus brevis (Lactobacillus brevis), this protein is Xylulose kinase.